Here is a 619-residue protein sequence, read N- to C-terminus: DNA mismatch repair protein MutL (619 aa).

This sequence belongs to the DNA mismatch repair MutL/HexB family.

Its function is as follows. This protein is involved in the repair of mismatches in DNA. It is required for dam-dependent methyl-directed DNA mismatch repair. May act as a 'molecular matchmaker', a protein that promotes the formation of a stable complex between two or more DNA-binding proteins in an ATP-dependent manner without itself being part of a final effector complex. This is DNA mismatch repair protein MutL from Xylella fastidiosa (strain 9a5c).